The sequence spans 487 residues: Cytochrome P450 2C16 (487 aa).

Cys432 is a heme binding site.

The protein belongs to the cytochrome P450 family. Heme serves as cofactor. Expressed constitutively in liver, lung, testes, and kidney.

The protein resides in the endoplasmic reticulum membrane. It localises to the microsome membrane. It catalyses the reaction an organic molecule + reduced [NADPH--hemoprotein reductase] + O2 = an alcohol + oxidized [NADPH--hemoprotein reductase] + H2O + H(+). Cytochromes P450 are a group of heme-thiolate monooxygenases. In liver microsomes, this enzyme is involved in an NADPH-dependent electron transport pathway. It oxidizes a variety of structurally unrelated compounds, including steroids, fatty acids, and xenobiotics. In Oryctolagus cuniculus (Rabbit), this protein is Cytochrome P450 2C16 (CYP2C16).